Here is a 500-residue protein sequence, read N- to C-terminus: MALRRLLLLLLLSLESLDLLPSVHGARGRAANRTLSAGGAAVGGRRAGGALARGGRELNGTARAPGIPEAGSRRGQPAAAVAAAASAAVTYETCWGYYDVSGQYDKEFECNNSESGYLYCCGTCYYRFCCKKRHEKLDQRQCTNYQSPVWVQTPSTKVVSPGPENKYDPEKDKTNFTVYITCGVIAFVIVAGVFAKVSYDKAHRPPREMNIHRALADILRQQGPIPIAHCERETISAIDTSPKENTPVRSSSKNHYTPVRTAKQTPEKPRMNNILTSATEPYDLSFSRSFQNLAHLPPSYESAVKTNPSKYSSLKRLTDKEADEYYMRRRHLPDLAARGTLPLNVIQMSQQKPLPRERPRRPIRAMSQDRVLSPDRGLPDEFSMPYDRILSDEQLLSTERLHSQDPLLSPERTAFPEQSLSRAISHTDVFVSTPVLDRYRMSKMHSHPSASNNSYATLGQSQTAAKRHAFASRRHNTVEQLHYIPGHHTCYTASKTEVTV.

A signal peptide spans 1–25 (MALRRLLLLLLLSLESLDLLPSVHG). Over 26-174 (ARGRAANRTL…NKYDPEKDKT (149 aa)) the chain is Extracellular. Asn-32 and Asn-59 each carry an N-linked (GlcNAc...) asparagine glycan. The segment at 52–73 (ARGGRELNGTARAPGIPEAGSR) is disordered. A helical membrane pass occupies residues 175 to 195 (NFTVYITCGVIAFVIVAGVFA). Over 196-500 (KVSYDKAHRP…YTASKTEVTV (305 aa)) the chain is Cytoplasmic. Residues 240 to 255 (TSPKENTPVRSSSKNH) show a composition bias toward polar residues. Disordered regions lie at residues 240–269 (TSPK…PEKP) and 349–378 (SQQK…DRGL). Residues Ser-391, Ser-397, and Ser-409 each carry the phosphoserine modification. Position 433 is a phosphothreonine (Thr-433). Residues 444-470 (MHSHPSASNNSYATLGQSQTAAKRHAF) are disordered. The segment covering 448–464 (PSASNNSYATLGQSQTA) has biased composition (polar residues). Thr-477 is modified (phosphothreonine). The PDZ-binding motif lies at 497–500 (EVTV).

Belongs to the shisa family. Component of the postsynaptic hippocampal AMPA-type glutamate receptor (AMPAR) complex, at least composed of pore forming AMPAR subunits GRIA1, GRIA2 and GRIA3 and AMPAR auxiliary proteins SHISA6 and SHISA7. Interacts (via PDZ-binding motif) with DLG4/PSD-95 (via PDZ domain); the interaction is direct. Expressed in the developing ventral mesencephalon.

The protein resides in the membrane. Its subcellular location is the postsynaptic density. In terms of biological role, involved in maintenance of high-frequency synaptic transmission at hippocampal CA3-CA1 synapses. Regulates AMPA-type glutamate receptor (AMPAR) immobilization at postsynaptic density keeping the channels in an activated state in the presence of glutamate and preventing synaptic depression. May play a role in self-renewal and differentiation of spermatogonial stem cells by inhibiting canonical Wnt signaling pathway. The polypeptide is Protein shisa-6 (Homo sapiens (Human)).